Here is a 342-residue protein sequence, read N- to C-terminus: Platelet-activating factor receptor (342 aa).

Topologically, residues 1 to 16 (MEPHDSSHMDSEFRYT) are extracellular. The helical transmembrane segment at 17–38 (LFPIVYSIIFVLGVIANGYVLW) threads the bilayer. The Cytoplasmic portion of the chain corresponds to 39–54 (VFARLYPCKKFNEIKI). The chain crosses the membrane as a helical span at residues 55 to 74 (FMVNLTMADMLFLITLPLWI). Topologically, residues 75–91 (VYYQNQGNWILPKFLCN) are extracellular. Residues cysteine 90 and cysteine 173 are joined by a disulfide bond. A helical membrane pass occupies residues 92 to 113 (VAGCLFFINTYCSVAFLGVITY). Topologically, residues 114–133 (NRFQAVTRPIKTAQANTRKR) are cytoplasmic. The helical transmembrane segment at 134–155 (GISLSLVIWVAIVGAASYFLIL) threads the bilayer. The Extracellular segment spans residues 156–184 (DSTNTVPDSAGSGNVTRCFEHYEKGSVPV). N-linked (GlcNAc...) asparagine glycosylation occurs at asparagine 169. The chain crosses the membrane as a helical span at residues 185–205 (LIIHIFIVFSFFLVFLIILFC). At 206–233 (NLVIIRTLLMQPVQQQRNAEVKRRALWM) the chain is on the cytoplasmic side. Residues 234–254 (VCTVLAVFIICFVPHHVVQLP) form a helical membrane-spanning segment. The Extracellular portion of the chain corresponds to 255 to 276 (WTLAELGFQDSKFHQAINDAHQ). A helical membrane pass occupies residues 277–296 (VTLCLLSTNCVLDPVIYCFL). Residues 297–342 (TKKFRKHLTEKFYSMRSSRKCSRATTDTVTEVVVPFNQIPGNSLKN) are Cytoplasmic-facing.

Belongs to the G-protein coupled receptor 1 family. As to quaternary structure, interacts with ARRB1. In terms of tissue distribution, expressed in the placenta, lung, left and right heart ventricles, heart atrium, leukocytes and differentiated HL-60 granulocytes.

The protein resides in the cell membrane. In terms of biological role, receptor for platelet activating factor, a chemotactic phospholipid mediator that possesses potent inflammatory, smooth-muscle contractile and hypotensive activity. Seems to mediate its action via a G protein that activates a phosphatidylinositol-calcium second messenger system. In Homo sapiens (Human), this protein is Platelet-activating factor receptor (PTAFR).